A 483-amino-acid polypeptide reads, in one-letter code: Phosphomethylpyrimidine synthase (483 aa).

Substrate-binding positions include Asn-97, Met-126, Tyr-156, His-192, 212 to 214 (SRG), 253 to 256 (DSLR), and Glu-292. His-296 contacts Zn(2+). Tyr-319 is a binding site for substrate. His-360 provides a ligand contact to Zn(2+). Residues Cys-440, Cys-443, and Cys-448 each contribute to the [4Fe-4S] cluster site.

This sequence belongs to the ThiC family. [4Fe-4S] cluster serves as cofactor.

The enzyme catalyses 5-amino-1-(5-phospho-beta-D-ribosyl)imidazole + S-adenosyl-L-methionine = 4-amino-2-methyl-5-(phosphooxymethyl)pyrimidine + CO + 5'-deoxyadenosine + formate + L-methionine + 3 H(+). It functions in the pathway cofactor biosynthesis; thiamine diphosphate biosynthesis. Catalyzes the synthesis of the hydroxymethylpyrimidine phosphate (HMP-P) moiety of thiamine from aminoimidazole ribotide (AIR) in a radical S-adenosyl-L-methionine (SAM)-dependent reaction. The polypeptide is Phosphomethylpyrimidine synthase (Parasynechococcus marenigrum (strain WH8102)).